We begin with the raw amino-acid sequence, 384 residues long: Ferrochelatase, mitochondrial (384 aa).

Cys156 serves as a coordination point for [2Fe-2S] cluster. Residues His190 and Asn343 contribute to the active site. Positions 363, 366, and 371 each coordinate [2Fe-2S] cluster.

It belongs to the ferrochelatase family. As to quaternary structure, homodimer. Homotetramer. It depends on [2Fe-2S] cluster as a cofactor.

It localises to the mitochondrion inner membrane. It catalyses the reaction heme b + 2 H(+) = protoporphyrin IX + Fe(2+). The protein operates within porphyrin-containing compound metabolism; protoheme biosynthesis; protoheme from protoporphyrin-IX: step 1/1. Functionally, catalyzes the ferrous insertion into protoporphyrin IX. Terminal enzyme in heme biosynthesis. Contains four conserved cysteines that function as cluster ligands and play a crucial role in maintaining protein structure. This is Ferrochelatase, mitochondrial from Drosophila melanogaster (Fruit fly).